Reading from the N-terminus, the 742-residue chain is Photosystem I P700 chlorophyll a apoprotein A2 2 (742 aa).

8 consecutive transmembrane segments (helical) span residues isoleucine 46–alanine 69, leucine 135–glutamine 158, leucine 175–isoleucine 199, methionine 273–tyrosine 291, leucine 334–tyrosine 357, alanine 373–isoleucine 399, alanine 421–histidine 443, and phenylalanine 524–valine 542. Residues cysteine 566 and cysteine 575 each coordinate [4Fe-4S] cluster. 2 helical membrane passes run serine 583–tryptophan 604 and leucine 651–isoleucine 673. The chlorophyll a site is built by histidine 662, methionine 670, and tyrosine 678. Tryptophan 679 lines the phylloquinone pocket. Residues leucine 715 to alanine 735 form a helical membrane-spanning segment.

The protein belongs to the PsaA/PsaB family. In terms of assembly, the PsaA/B heterodimer binds the P700 chlorophyll special pair and subsequent electron acceptors. PSI consists of a core antenna complex that captures photons, and an electron transfer chain that converts photonic excitation into a charge separation. The cyanobacterial PSI reaction center is composed of one copy each of PsaA,B,C,D,E,F,I,J,K,L,M and X, and forms trimeric complexes. It depends on PSI electron transfer chain: 5 chlorophyll a, 1 chlorophyll a', 2 phylloquinones and 3 4Fe-4S clusters. PSI core antenna: 90 chlorophyll a, 22 carotenoids, 3 phospholipids and 1 galactolipid. P700 is a chlorophyll a/chlorophyll a' dimer, A0 is one or more chlorophyll a, A1 is one or both phylloquinones and FX is a shared 4Fe-4S iron-sulfur center. as a cofactor.

The protein resides in the cellular thylakoid membrane. It carries out the reaction reduced [plastocyanin] + hnu + oxidized [2Fe-2S]-[ferredoxin] = oxidized [plastocyanin] + reduced [2Fe-2S]-[ferredoxin]. In terms of biological role, psaA and PsaB bind P700, the primary electron donor of photosystem I (PSI), as well as the electron acceptors A0, A1 and FX. PSI is a plastocyanin/cytochrome c6-ferredoxin oxidoreductase, converting photonic excitation into a charge separation, which transfers an electron from the donor P700 chlorophyll pair to the spectroscopically characterized acceptors A0, A1, FX, FA and FB in turn. Oxidized P700 is reduced on the lumenal side of the thylakoid membrane by plastocyanin or cytochrome c6. The sequence is that of Photosystem I P700 chlorophyll a apoprotein A2 2 (psaB2) from Nostoc sp. (strain PCC 7120 / SAG 25.82 / UTEX 2576).